The chain runs to 588 residues: Lamin-B1 (588 aa).

The span at 1 to 12 (MATATPVQQQRA) shows a compositional bias: polar residues. The tract at residues 1–34 (MATATPVQQQRAGSRASAPATPLSPTRLSRLQEK) is disordered. Ala-2 carries the N-acetylalanine modification. Residues 2 to 35 (ATATPVQQQRAGSRASAPATPLSPTRLSRLQEKE) are head. Phosphothreonine occurs at positions 3 and 5. Position 15 is an omega-N-methylarginine (Arg-15). Ser-17 is subject to Phosphoserine. Thr-21 carries the phosphothreonine modification. The residue at position 24 (Ser-24) is a Phosphoserine. A Phosphothreonine modification is found at Thr-26. At Ser-29 the chain carries Phosphoserine. The region spanning 33-389 (EKEELRELND…KLLEGEEERL (357 aa)) is the IF rod domain. The coil 1A stretch occupies residues 36–70 (ELRELNDRLAVYIDKVRSLETENSALQLQVTEREE). The interval 71–82 (VRGRELTGLKAL) is linker 1. The coil 1B stretch occupies residues 83–216 (YETELADARR…EFRKNMYEEE (134 aa)). Lys-103 participates in a covalent cross-link: Glycyl lysine isopeptide (Lys-Gly) (interchain with G-Cter in SUMO2). The residue at position 112 (Lys-112) is an N6-acetyllysine. A Glycyl lysine isopeptide (Lys-Gly) (interchain with G-Cter in SUMO2) cross-link involves residue Lys-124. The residue at position 127 (Ser-127) is a Phosphoserine. Lys-146 is covalently cross-linked (Glycyl lysine isopeptide (Lys-Gly) (interchain with G-Cter in SUMO2)). N6-acetyllysine; alternate is present on Lys-158. Lys-158 is covalently cross-linked (Glycyl lysine isopeptide (Lys-Gly) (interchain with G-Cter in SUMO2); alternate). A Phosphoserine modification is found at Ser-159. A Glycyl lysine isopeptide (Lys-Gly) (interchain with G-Cter in SUMO2) cross-link involves residue Lys-182. Phosphoserine is present on residues Ser-201 and Ser-233. The interval 217–244 (INETRRKHETRLVEVDSGRQIEYEYKLA) is linker 2. Residues Lys-242 and Lys-262 each participate in a glycyl lysine isopeptide (Lys-Gly) (interchain with G-Cter in SUMO2) cross-link. A coil 2 region spans residues 245–387 (QALHEMREQH…YRKLLEGEEE (143 aa)). Lys-272 is modified (N6-acetyllysine; alternate). Residue Lys-272 forms a Glycyl lysine isopeptide (Lys-Gly) (interchain with G-Cter in SUMO2); alternate linkage. A phosphoserine mark is found at Ser-279 and Ser-303. A Glycyl lysine isopeptide (Lys-Gly) (interchain with G-Cter in SUMO2) cross-link involves residue Lys-313. Position 331 is an N6-acetyllysine; alternate (Lys-331). A Glycyl lysine isopeptide (Lys-Gly) (interchain with G-Cter in SUMO2); alternate cross-link involves residue Lys-331. Ser-376 and Ser-394 each carry phosphoserine. The interval 388–588 (RLKLSPSPSS…RASNKSCAIM (201 aa)) is tail. Residues 391–410 (LSPSPSSRVTVSRASSSRSV) are compositionally biased toward low complexity. The segment at 391–433 (LSPSPSSRVTVSRASSSRSVRTTRGKRKRVDVEESEASSSVSI) is disordered. O-linked (GlcNAc) threonine glycosylation is present at Thr-400. Arg-414 is modified (omega-N-methylarginine). Residues 416-421 (KRKRVD) carry the Nuclear localization signal motif. The 117-residue stretch at 431–547 (VSISHSASAT…EEVAQRSTVF (117 aa)) folds into the LTD domain. An N6-acetyllysine modification is found at Lys-484. Residue Lys-533 forms a Glycyl lysine isopeptide (Lys-Gly) (interchain with G-Cter in SUMO2) linkage. Ser-535 carries the post-translational modification Phosphoserine. A Glycyl lysine isopeptide (Lys-Gly) (interchain with G-Cter in SUMO2) cross-link involves residue Lys-548. Cys-585 carries the cysteine methyl ester modification. Cys-585 carries the S-farnesyl cysteine lipid modification. Residues 586-588 (AIM) constitute a propeptide, removed in mature form.

It belongs to the intermediate filament family. Homodimer. Lamin dimers then assemble into dimeric head-to-tail polymers. Ultimately, two head-to-tail polymers assemble laterally into a protofilament with a uniformly shaped rod of 3.5 nm in diameter. Interacts with SPAG4 and SEPT12. In terms of processing, B-type lamins undergo a series of modifications, such as farnesylation and phosphorylation. Increased phosphorylation of the lamins occurs before envelope disintegration and probably plays a role in regulating lamin associations. Post-translationally, phosphorylation plays a key role in lamin organization, subcellular localization and nuclear envelope disintegration. Phosphorylation by CDK1 at Ser-24 and Ser-394 at the onset of mitosis drives lamin disassembly and nuclear envelope breakdown.

It localises to the nucleus lamina. Lamins are intermediate filament proteins that assemble into a filamentous meshwork, and which constitute the major components of the nuclear lamina, a fibrous layer on the nucleoplasmic side of the inner nuclear membrane. Lamins provide a framework for the nuclear envelope, bridging the nuclear envelope and chromatin, thereby playing an important role in nuclear assembly, chromatin organization, nuclear membrane and telomere dynamics. The structural integrity of the lamina is strictly controlled by the cell cycle, as seen by the disintegration and formation of the nuclear envelope in prophase and telophase, respectively. The polypeptide is Lamin-B1 (Lmnb1) (Mus musculus (Mouse)).